Reading from the N-terminus, the 336-residue chain is Putative ALA-interacting subunit 4 (336 aa).

The chain crosses the membrane as a helical span at residues 36–56 (VILTFLVSGVVFIPLGVICLF). The N-linked (GlcNAc...) asparagine glycan is linked to Asn94. Over residues 127-142 (RQDGQLRSPKDEHETK) the composition is skewed to basic and acidic residues. Residues 127 to 148 (RQDGQLRSPKDEHETKSCAPED) form a disordered region. N-linked (GlcNAc...) asparagine glycosylation occurs at Asn167. The helical transmembrane segment at 290–310 (FLGIAYLTVGSICLFLAVSFS) threads the bilayer. A glycan (N-linked (GlcNAc...) asparagine) is linked at Asn329.

Belongs to the CDC50/LEM3 family. Expressed in flowers. May be restricted to pollen grains.

The protein localises to the membrane. The protein is Putative ALA-interacting subunit 4 (ALIS4) of Arabidopsis thaliana (Mouse-ear cress).